A 202-amino-acid chain; its full sequence is Peptide deformylase 2 (202 aa).

Residues cysteine 123 and histidine 165 each contribute to the Fe cation site. Residue glutamate 166 is part of the active site. Histidine 169 lines the Fe cation pocket.

Belongs to the polypeptide deformylase family. Fe(2+) is required as a cofactor.

It catalyses the reaction N-terminal N-formyl-L-methionyl-[peptide] + H2O = N-terminal L-methionyl-[peptide] + formate. In terms of biological role, removes the formyl group from the N-terminal Met of newly synthesized proteins. Requires at least a dipeptide for an efficient rate of reaction. N-terminal L-methionine is a prerequisite for activity but the enzyme has broad specificity at other positions. The protein is Peptide deformylase 2 of Vibrio vulnificus (strain YJ016).